A 1033-amino-acid chain; its full sequence is Kinesin-like protein KIN-4A (1033 aa).

In terms of domain architecture, Kinesin motor spans 11 to 366 (CVKVAVHVRP…LKYANRARNI (356 aa)). 89–96 (GQTGSGKT) serves as a coordination point for ATP. Residues 443–462 (QDGSPCSVESDGLKRNLRSR) are disordered. Basic and acidic residues predominate over residues 453-462 (DGLKRNLRSR). Positions 525 to 638 (ALKQHFGKKI…IKQEAEQFRQ (114 aa)) form a coiled coil. Residues 763 to 785 (DELDSKGPSPSRGKNGCARGSSL) form a disordered region. The stretch at 863-895 (IEIREMKEQLKELVGLLRQSELQRKEVENELKL) forms a coiled coil.

It belongs to the TRAFAC class myosin-kinesin ATPase superfamily. Kinesin family. KIN-4 subfamily. In terms of assembly, homodimer. In terms of tissue distribution, expressed in cotton fibers.

It is found in the cytoplasm. Functionally, kinesin-like motor protein involved in the control of the oriented deposition of cellulose microfibrils. This is Kinesin-like protein KIN-4A from Gossypium hirsutum (Upland cotton).